Here is a 201-residue protein sequence, read N- to C-terminus: Endoribonuclease YbeY (201 aa).

Zn(2+) contacts are provided by histidine 120, histidine 124, and histidine 130. The disordered stretch occupies residues 151–201 (DGADGADGADGARGAADGAADGGEGRRGDQGRRGDQGRGGGAGEPPAAPAR). Residues 173 to 186 (GEGRRGDQGRRGDQ) are compositionally biased toward basic and acidic residues.

The protein belongs to the endoribonuclease YbeY family. Requires Zn(2+) as cofactor.

It localises to the cytoplasm. Single strand-specific metallo-endoribonuclease involved in late-stage 70S ribosome quality control and in maturation of the 3' terminus of the 16S rRNA. The polypeptide is Endoribonuclease YbeY (Frankia casuarinae (strain DSM 45818 / CECT 9043 / HFP020203 / CcI3)).